The chain runs to 506 residues: Histidine ammonia-lyase (506 aa).

The segment at residues 143–145 (ASG) is a cross-link (5-imidazolinone (Ala-Gly)). Position 144 is a 2,3-didehydroalanine (Ser) (S144).

Belongs to the PAL/histidase family. In terms of processing, contains an active site 4-methylidene-imidazol-5-one (MIO), which is formed autocatalytically by cyclization and dehydration of residues Ala-Ser-Gly.

Its subcellular location is the cytoplasm. The enzyme catalyses L-histidine = trans-urocanate + NH4(+). It functions in the pathway amino-acid degradation; L-histidine degradation into L-glutamate; N-formimidoyl-L-glutamate from L-histidine: step 1/3. The polypeptide is Histidine ammonia-lyase (Salmonella gallinarum (strain 287/91 / NCTC 13346)).